A 159-amino-acid chain; its full sequence is Immunoglobulin J chain (159 aa).

The N-terminal stretch at 1-22 (MKNHLLFWGVLAVFIKAVHVKA) is a signal peptide. Q23 carries the post-translational modification Pyrrolidone carboxylic acid. 3 cysteine pairs are disulfide-bonded: C35-C123, C94-C114, and C131-C156. A glycan (N-linked (GlcNAc...) (complex) asparagine) is linked at N71.

Part of the secretory IgA (sIgA) complex that consists of two, four or five IgA monomers, and two additional non-Ig polypeptides, namely the JCHAIN and the secretory component (the proteolytic product of PIGR). Part of the secretory IgM (sIgM) complex that consists of five IgM monomers, and two additional non-Ig polypeptides, namely the JCHAIN and the secretory component (the proteolytic product of PIGR). JCHAIN-containing IgM interacts (via CH4 domain) with FCRM (via Ig-like domain).

It localises to the secreted. In terms of biological role, serves to link two monomer units of either IgM or IgA. In the case of IgM, the J chain-joined dimer is a nucleating unit for the IgM pentamer, and in the case of IgA it induces dimers and/or larger polymers. It also helps to bind these immunoglobulins to secretory component. This is Immunoglobulin J chain from Homo sapiens (Human).